The chain runs to 637 residues: DNA gyrase subunit B (637 aa).

The Toprim domain occupies Cys-420–Pro-534. 3 residues coordinate Mg(2+): Glu-426, Asp-499, and Asp-501.

This sequence belongs to the type II topoisomerase GyrB family. As to quaternary structure, heterotetramer, composed of two GyrA and two GyrB chains. In the heterotetramer, GyrA contains the active site tyrosine that forms a transient covalent intermediate with DNA, while GyrB binds cofactors and catalyzes ATP hydrolysis. Mg(2+) is required as a cofactor. Requires Mn(2+) as cofactor. Ca(2+) serves as cofactor.

The protein localises to the cytoplasm. It catalyses the reaction ATP-dependent breakage, passage and rejoining of double-stranded DNA.. In terms of biological role, a type II topoisomerase that negatively supercoils closed circular double-stranded (ds) DNA in an ATP-dependent manner to modulate DNA topology and maintain chromosomes in an underwound state. Negative supercoiling favors strand separation, and DNA replication, transcription, recombination and repair, all of which involve strand separation. Also able to catalyze the interconversion of other topological isomers of dsDNA rings, including catenanes and knotted rings. Type II topoisomerases break and join 2 DNA strands simultaneously in an ATP-dependent manner. In Clostridium acetobutylicum (strain ATCC 824 / DSM 792 / JCM 1419 / IAM 19013 / LMG 5710 / NBRC 13948 / NRRL B-527 / VKM B-1787 / 2291 / W), this protein is DNA gyrase subunit B.